Reading from the N-terminus, the 273-residue chain is 2,3,4,5-tetrahydropyridine-2,6-dicarboxylate N-succinyltransferase (273 aa).

Residues Arg-104 and Asp-141 each coordinate substrate.

The protein belongs to the transferase hexapeptide repeat family. As to quaternary structure, homotrimer.

It is found in the cytoplasm. The enzyme catalyses (S)-2,3,4,5-tetrahydrodipicolinate + succinyl-CoA + H2O = (S)-2-succinylamino-6-oxoheptanedioate + CoA. The protein operates within amino-acid biosynthesis; L-lysine biosynthesis via DAP pathway; LL-2,6-diaminopimelate from (S)-tetrahydrodipicolinate (succinylase route): step 1/3. This is 2,3,4,5-tetrahydropyridine-2,6-dicarboxylate N-succinyltransferase from Neisseria meningitidis serogroup C (strain 053442).